The sequence spans 676 residues: UvrABC system protein B (676 aa).

The region spanning 26–414 (EGLENGLAHQ…SDGEIAEQVV (389 aa)) is the Helicase ATP-binding domain. Residue 39-46 (GVTGSGKT) coordinates ATP. Positions 92–115 (YFDYYQPEAYVPTTDTFIEKDSSV) match the Beta-hairpin motif. Positions 432–598 (QVDDLLSEIR…ALKKDVADIL (167 aa)) constitute a Helicase C-terminal domain. In terms of domain architecture, UVR spans 636 to 671 (EKAIQKLESKMYQHAKDLEFEQAAQVRDEIDNLRKQ).

It belongs to the UvrB family. In terms of assembly, forms a heterotetramer with UvrA during the search for lesions. Interacts with UvrC in an incision complex.

The protein resides in the cytoplasm. The UvrABC repair system catalyzes the recognition and processing of DNA lesions. A damage recognition complex composed of 2 UvrA and 2 UvrB subunits scans DNA for abnormalities. Upon binding of the UvrA(2)B(2) complex to a putative damaged site, the DNA wraps around one UvrB monomer. DNA wrap is dependent on ATP binding by UvrB and probably causes local melting of the DNA helix, facilitating insertion of UvrB beta-hairpin between the DNA strands. Then UvrB probes one DNA strand for the presence of a lesion. If a lesion is found the UvrA subunits dissociate and the UvrB-DNA preincision complex is formed. This complex is subsequently bound by UvrC and the second UvrB is released. If no lesion is found, the DNA wraps around the other UvrB subunit that will check the other stand for damage. The sequence is that of UvrABC system protein B from Aliivibrio fischeri (strain ATCC 700601 / ES114) (Vibrio fischeri).